Here is a 326-residue protein sequence, read N- to C-terminus: GTP 3',8-cyclase (326 aa).

Positions 5–227 (GHGRTVDYLR…ALGREGASPS (223 aa)) constitute a Radical SAM core domain. Residue Arg-14 participates in GTP binding. Residues Cys-21 and Cys-25 each contribute to the [4Fe-4S] cluster site. An S-adenosyl-L-methionine-binding site is contributed by Tyr-27. Cys-28 is a [4Fe-4S] cluster binding site. Arg-64 lines the GTP pocket. Gly-68 contributes to the S-adenosyl-L-methionine binding site. Residue Thr-95 coordinates GTP. Ser-119 is a binding site for S-adenosyl-L-methionine. A GTP-binding site is contributed by Lys-155. Met-189 lines the S-adenosyl-L-methionine pocket. Residues Cys-250 and Cys-253 each coordinate [4Fe-4S] cluster. A GTP-binding site is contributed by 255-257 (RIR). Cys-267 contacts [4Fe-4S] cluster.

This sequence belongs to the radical SAM superfamily. MoaA family. In terms of assembly, monomer and homodimer. Requires [4Fe-4S] cluster as cofactor.

The enzyme catalyses GTP + AH2 + S-adenosyl-L-methionine = (8S)-3',8-cyclo-7,8-dihydroguanosine 5'-triphosphate + 5'-deoxyadenosine + L-methionine + A + H(+). Its pathway is cofactor biosynthesis; molybdopterin biosynthesis. Functionally, catalyzes the cyclization of GTP to (8S)-3',8-cyclo-7,8-dihydroguanosine 5'-triphosphate. This Sulfurovum sp. (strain NBC37-1) protein is GTP 3',8-cyclase.